The chain runs to 80 residues: WAP four-disulfide core domain protein 15B (80 aa).

A signal peptide spans 1-20 (MKLLGLSLLAVTILLCCNMA). Residues 29–76 (VFSKPGYCPEYRVPCPFVLIPKCRRDKGCKDALKCCFFYCQMRCVDPW) form the WAP domain. Disulfide bonds link C36/C64, C43/C68, C51/C63, and C57/C72.

Constitutively expressed in kidney and epididymis.

Its subcellular location is the secreted. Functionally, antibacterial protein which inhibits the growth of E.coli and S.aureus. The polypeptide is WAP four-disulfide core domain protein 15B (Wfdc15b) (Mus musculus (Mouse)).